Reading from the N-terminus, the 236-residue chain is Small ribosomal subunit protein uS2c (236 aa).

Belongs to the universal ribosomal protein uS2 family.

Its subcellular location is the plastid. The protein resides in the chloroplast. The sequence is that of Small ribosomal subunit protein uS2c (rps2) from Calycanthus floridus var. glaucus (Eastern sweetshrub).